The sequence spans 253 residues: MPKLQLSELLSLTKVEQTLRLAEVNVELEKLTAQERVVWALENLEGNPALSSSFGIQAAVMLQLVTEVKSDTPIILTDTGYLFPETYQFIDQLTDRLNLNLHVFTADESPNWQEARYGKLWEQGVEGIEKYNKLNKVQPMRRALDQLEIGVWFSGLRREQSGSRANLPILSIQNGVFKFLPVLDWTNKEVHYFLKEYDLPYHPLWDQGYLSVGDTHTTQKWEPGMSEEETRFFGLKRECGLHEDDGELDGSGI.

The active-site Nucleophile; cysteine thiosulfonate intermediate is Cys239.

This sequence belongs to the PAPS reductase family. CysH subfamily.

It is found in the cytoplasm. It carries out the reaction [thioredoxin]-disulfide + sulfite + adenosine 3',5'-bisphosphate + 2 H(+) = [thioredoxin]-dithiol + 3'-phosphoadenylyl sulfate. Its pathway is sulfur metabolism; hydrogen sulfide biosynthesis; sulfite from sulfate: step 3/3. Catalyzes the formation of sulfite from phosphoadenosine 5'-phosphosulfate (PAPS) using thioredoxin as an electron donor. This Aliivibrio fischeri (strain ATCC 700601 / ES114) (Vibrio fischeri) protein is Phosphoadenosine 5'-phosphosulfate reductase.